A 936-amino-acid polypeptide reads, in one-letter code: Periplasmic nitrate reductase (936 aa).

A signal peptide (tat-type signal) is located at residues 1–31; the sequence is MALSRRDFLKSSAAAAAASAVGLSVPKEVEA. The 4Fe-4S Mo/W bis-MGD-type domain maps to 40 to 96; that stretch reads WRWDKAVCRFCGTGCGIMIATKDDRIVAVKGDPLAPVNRGLNCIKGYFTAKIMYGAD. Positions 47, 50, 54, and 82 each coordinate [4Fe-4S] cluster. Mo-bis(molybdopterin guanine dinucleotide) contacts are provided by residues K84, Q152, N177, C181, 214-221, 246-250, M424, Q428, N534, 559-560, K582, D609, and 826-835; these read WGSNMAEM, STYTH, SD, and TGRVLEHWHS. A substrate-binding site is contributed by W902. 2 residues coordinate Mo-bis(molybdopterin guanine dinucleotide): N910 and K927.

This sequence belongs to the prokaryotic molybdopterin-containing oxidoreductase family. NasA/NapA/NarB subfamily. In terms of assembly, component of the periplasmic nitrate reductase NapAB complex composed of NapA and NapB. It depends on [4Fe-4S] cluster as a cofactor. The cofactor is Mo-bis(molybdopterin guanine dinucleotide). In terms of processing, predicted to be exported by the Tat system. The position of the signal peptide cleavage has not been experimentally proven.

The protein resides in the periplasm. The catalysed reaction is 2 Fe(II)-[cytochrome] + nitrate + 2 H(+) = 2 Fe(III)-[cytochrome] + nitrite + H2O. Its function is as follows. Catalytic subunit of the periplasmic nitrate reductase complex NapAB. Receives electrons from NapB and catalyzes the reduction of nitrate to nitrite. In Nitratiruptor sp. (strain SB155-2), this protein is Periplasmic nitrate reductase.